The primary structure comprises 72 residues: Cytochrome b-c1 complex subunit 8-2, mitochondrial (72 aa).

Residues 1–41 (MGKQPVKLKAVVYALSPFQQKIMTGLWKDLPEKIHHKVSEN) lie on the Mitochondrial matrix side of the membrane. Residues 42–58 (WISTILLVAPVVGTYSY) form a helical membrane-spanning segment. The Mitochondrial intermembrane segment spans residues 59–72 (AQYFKEQEKLEHRF).

Belongs to the UQCRQ/QCR8 family. As to quaternary structure, component of the ubiquinol-cytochrome c oxidoreductase (cytochrome b-c1 complex, complex III, CIII), a multisubunit enzyme composed of 10 subunits. The complex is composed of 3 respiratory subunits cytochrome b (MT-CYB), cytochrome c1 (CYC1-1 or CYC1-2) and Rieske protein (UCR1-1 or UCR1-2), 2 core protein subunits MPPalpha1 (or MPPalpha2) and MPPB, and 5 low-molecular weight protein subunits QCR7-1 (or QCR7-2), UCRQ-1 (or UCRQ-2), QCR9, UCRY and probably QCR6-1 (or QCR6-2). The complex exists as an obligatory dimer and forms supercomplexes (SCs) in the inner mitochondrial membrane with NADH-ubiquinone oxidoreductase (complex I, CI), resulting in different assemblies (supercomplexes SCI(1)III(2) and SCI(2)III(4)).

Its subcellular location is the mitochondrion inner membrane. Component of the ubiquinol-cytochrome c oxidoreductase, a multisubunit transmembrane complex that is part of the mitochondrial electron transport chain which drives oxidative phosphorylation. The respiratory chain contains 3 multisubunit complexes succinate dehydrogenase (complex II, CII), ubiquinol-cytochrome c oxidoreductase (cytochrome b-c1 complex, complex III, CIII) and cytochrome c oxidase (complex IV, CIV), that cooperate to transfer electrons derived from NADH and succinate to molecular oxygen, creating an electrochemical gradient over the inner membrane that drives transmembrane transport and the ATP synthase. The cytochrome b-c1 complex catalyzes electron transfer from ubiquinol to cytochrome c, linking this redox reaction to translocation of protons across the mitochondrial inner membrane, with protons being carried across the membrane as hydrogens on the quinol. In the process called Q cycle, 2 protons are consumed from the matrix, 4 protons are released into the intermembrane space and 2 electrons are passed to cytochrome c. This chain is Cytochrome b-c1 complex subunit 8-2, mitochondrial (UCRQ-2), found in Arabidopsis thaliana (Mouse-ear cress).